The primary structure comprises 333 residues: Lipoyl synthase (333 aa).

The segment at 1–29 is disordered; the sequence is MTDSAAGATEVATPATPSNKPYDATAKQK. 7 residues coordinate [4Fe-4S] cluster: C80, C85, C91, C106, C110, C113, and S320. Positions 91–309 constitute a Radical SAM core domain; it reads CFGKGTATFM…EEKAYEMGFT (219 aa).

The protein belongs to the radical SAM superfamily. Lipoyl synthase family. [4Fe-4S] cluster is required as a cofactor.

It is found in the cytoplasm. It catalyses the reaction [[Fe-S] cluster scaffold protein carrying a second [4Fe-4S](2+) cluster] + N(6)-octanoyl-L-lysyl-[protein] + 2 oxidized [2Fe-2S]-[ferredoxin] + 2 S-adenosyl-L-methionine + 4 H(+) = [[Fe-S] cluster scaffold protein] + N(6)-[(R)-dihydrolipoyl]-L-lysyl-[protein] + 4 Fe(3+) + 2 hydrogen sulfide + 2 5'-deoxyadenosine + 2 L-methionine + 2 reduced [2Fe-2S]-[ferredoxin]. Its pathway is protein modification; protein lipoylation via endogenous pathway; protein N(6)-(lipoyl)lysine from octanoyl-[acyl-carrier-protein]: step 2/2. In terms of biological role, catalyzes the radical-mediated insertion of two sulfur atoms into the C-6 and C-8 positions of the octanoyl moiety bound to the lipoyl domains of lipoate-dependent enzymes, thereby converting the octanoylated domains into lipoylated derivatives. This chain is Lipoyl synthase, found in Ralstonia pickettii (strain 12J).